Here is a 397-residue protein sequence, read N- to C-terminus: Multidrug resistance protein MdtH (397 aa).

10 helical membrane passes run 11–31 (WFLALDSLLVILGFFVVMPMI), 71–91 (FGARPLIVGGMLLRAAGFASL), 94–114 (AQSGLELILSCIISGLGGCLF), 137–157 (LLMMLESAGAVVGALLGSWLL), 163–183 (YVCLLGAGLFVCAALCNLLIL), 211–231 (LVLILSGYYALWVQVMLIFPI), 242–262 (AVGWMYTLETAISLTLLYPLA), 291–311 (FATTLPAVFVLLACFYLGIVI), 338–358 (LGLALGGMTGYVGGGALHDYA), and 366–386 (LPWLVLGTVGVTTLLLLVNCF).

It belongs to the major facilitator superfamily. DHA1 family. MdtH (TC 2.A.1.2.21) subfamily.

The protein resides in the cell inner membrane. The chain is Multidrug resistance protein MdtH from Aeromonas salmonicida (strain A449).